Consider the following 274-residue polypeptide: Thymidylate synthase (274 aa).

Arginine 21 contributes to the dUMP binding site. Histidine 51 contributes to the (6R)-5,10-methylene-5,6,7,8-tetrahydrofolate binding site. 123-124 (RR) is a binding site for dUMP. Cysteine 156 functions as the Nucleophile in the catalytic mechanism. DUMP contacts are provided by residues 176–179 (RSAD), asparagine 187, and 217–219 (HIY). Position 179 (aspartate 179) interacts with (6R)-5,10-methylene-5,6,7,8-tetrahydrofolate. Alanine 273 is a (6R)-5,10-methylene-5,6,7,8-tetrahydrofolate binding site.

Belongs to the thymidylate synthase family. Bacterial-type ThyA subfamily. Homodimer.

Its subcellular location is the cytoplasm. It catalyses the reaction dUMP + (6R)-5,10-methylene-5,6,7,8-tetrahydrofolate = 7,8-dihydrofolate + dTMP. The protein operates within pyrimidine metabolism; dTTP biosynthesis. In terms of biological role, catalyzes the reductive methylation of 2'-deoxyuridine-5'-monophosphate (dUMP) to 2'-deoxythymidine-5'-monophosphate (dTMP) while utilizing 5,10-methylenetetrahydrofolate (mTHF) as the methyl donor and reductant in the reaction, yielding dihydrofolate (DHF) as a by-product. This enzymatic reaction provides an intracellular de novo source of dTMP, an essential precursor for DNA biosynthesis. The polypeptide is Thymidylate synthase (Christiangramia forsetii (strain DSM 17595 / CGMCC 1.15422 / KT0803) (Gramella forsetii)).